The sequence spans 272 residues: 3-methyl-2-oxobutanoate hydroxymethyltransferase (272 aa).

2 residues coordinate Mg(2+): Asp52 and Asp91. 3-methyl-2-oxobutanoate contacts are provided by residues Asp52–Ser53, Asp91, and Lys121. Residue Glu123 participates in Mg(2+) binding. The Proton acceptor role is filled by Glu190.

Belongs to the PanB family. Homodecamer; pentamer of dimers. Mg(2+) serves as cofactor.

It is found in the cytoplasm. The catalysed reaction is 3-methyl-2-oxobutanoate + (6R)-5,10-methylene-5,6,7,8-tetrahydrofolate + H2O = 2-dehydropantoate + (6S)-5,6,7,8-tetrahydrofolate. It functions in the pathway cofactor biosynthesis; (R)-pantothenate biosynthesis; (R)-pantoate from 3-methyl-2-oxobutanoate: step 1/2. Functionally, catalyzes the reversible reaction in which hydroxymethyl group from 5,10-methylenetetrahydrofolate is transferred onto alpha-ketoisovalerate to form ketopantoate. The chain is 3-methyl-2-oxobutanoate hydroxymethyltransferase from Cytophaga hutchinsonii (strain ATCC 33406 / DSM 1761 / CIP 103989 / NBRC 15051 / NCIMB 9469 / D465).